The sequence spans 211 residues: Urease accessory protein UreG (211 aa).

GTP is bound at residue 12-19 (GPVGAGKT).

The protein belongs to the SIMIBI class G3E GTPase family. UreG subfamily. Homodimer. UreD, UreF and UreG form a complex that acts as a GTP-hydrolysis-dependent molecular chaperone, activating the urease apoprotein by helping to assemble the nickel containing metallocenter of UreC. The UreE protein probably delivers the nickel.

It localises to the cytoplasm. Functionally, facilitates the functional incorporation of the urease nickel metallocenter. This process requires GTP hydrolysis, probably effectuated by UreG. This is Urease accessory protein UreG from Paracoccus denitrificans (strain Pd 1222).